The primary structure comprises 146 residues: Large ribosomal subunit protein uL15x (146 aa).

2 stretches are compositionally biased toward basic residues: residues 1 to 14 (MTTR…KRGH) and 21 to 30 (RIGKHRKHPG). A disordered region spans residues 1–35 (MTTRFKKNRKKRGHVSAGHGRIGKHRKHPGGRGNA).

The protein belongs to the universal ribosomal protein uL15 family.

The chain is Large ribosomal subunit protein uL15x (RPL27AC) from Arabidopsis thaliana (Mouse-ear cress).